The primary structure comprises 461 residues: Ig heavy chain C region, membrane-bound form (461 aa).

The CH1 stretch occupies residues 1–99 (ATPSPPTLYG…GESVWIKEIP (99 aa)). Positions 100 to 205 (DCKGDKVHPT…TQSRNITGSQ (106 aa)) are CH2. N-linked (GlcNAc...) asparagine glycans are attached at residues Asn164, Asn200, Asn245, Asn275, Asn374, Asn411, Asn415, and Asn437. The interval 206–308 (VPCSCNDPVI…PLRASIHKEE (103 aa)) is CH3. Residues 309–418 (VKDLREPSVS…IINRTVNKSS (110 aa)) are CH4. A helical membrane pass occupies residues 438 to 458 (ASTFIILFFLSIFYRAAVTLV).

The protein resides in the cell membrane. This Heterodontus francisci (Horn shark) protein is Ig heavy chain C region, membrane-bound form.